The following is a 405-amino-acid chain: Argininosuccinate synthase (405 aa).

ATP-binding positions include 10-18 (AYSGGLDTS) and alanine 37. L-citrulline-binding residues include tyrosine 88 and serine 93. Glycine 118 is an ATP binding site. Positions 120, 124, and 125 each coordinate L-aspartate. Asparagine 124 serves as a coordination point for L-citrulline. L-citrulline-binding residues include arginine 128, serine 179, serine 188, glutamate 264, and tyrosine 276.

It belongs to the argininosuccinate synthase family. Type 1 subfamily. In terms of assembly, homotetramer.

It localises to the cytoplasm. The catalysed reaction is L-citrulline + L-aspartate + ATP = 2-(N(omega)-L-arginino)succinate + AMP + diphosphate + H(+). It participates in amino-acid biosynthesis; L-arginine biosynthesis; L-arginine from L-ornithine and carbamoyl phosphate: step 2/3. The chain is Argininosuccinate synthase from Pseudomonas syringae pv. tomato (strain ATCC BAA-871 / DC3000).